The following is a 344-amino-acid chain: Laforin, isoform 9 (344 aa).

Disordered regions lie at residues 1 to 44 (MHPK…PGPG), 58 to 134 (GGGA…PRGH), 158 to 188 (PAPGAERELRPAPPTGASASGRPRRPRRRAS), and 320 to 344 (SLKKTQNDPTNETSVFANPRQQCAT). A compositionally biased stretch (low complexity) spans 77-88 (AARAGALGAARC). The span at 101–131 (RGPGPAGAGPVARGGGAGGRGGGAGRGGAGP) shows a compositional bias: gly residues. Over residues 179-188 (RPRRPRRRAS) the composition is skewed to basic residues.

Interacts with isoform 1 and isoform 2.

The protein resides in the nucleus. The chain is Laforin, isoform 9 from Homo sapiens (Human).